The primary structure comprises 413 residues: Cell division protein FtsZ 2 (413 aa).

Residues 132–134, E171, R175, and D218 contribute to the GTP site; that span reads GTG.

This sequence belongs to the FtsZ family. In terms of assembly, homodimer. Polymerizes to form a dynamic ring structure in a strictly GTP-dependent manner. Interacts directly with several other division proteins.

The protein resides in the cytoplasm. Its function is as follows. Essential cell division protein that forms a contractile ring structure (Z ring) at the future cell division site. The regulation of the ring assembly controls the timing and the location of cell division. One of the functions of the FtsZ ring is to recruit other cell division proteins to the septum to produce a new cell wall between the dividing cells. Binds GTP and shows GTPase activity. This chain is Cell division protein FtsZ 2, found in Thermococcus kodakarensis (strain ATCC BAA-918 / JCM 12380 / KOD1) (Pyrococcus kodakaraensis (strain KOD1)).